A 521-amino-acid polypeptide reads, in one-letter code: Glucomannan 4-beta-mannosyltransferase 1 (521 aa).

A helical membrane pass occupies residues 22 to 42 (VIVPLLRLAVAVCLTMSVLLF). Aspartate 123 is an active-site residue. The substrate site is built by aspartate 182 and aspartate 184. Aspartate 276 is a catalytic residue. The next 4 membrane-spanning stretches (helical) occupy residues 355 to 375 (IIAH…TIFV), 391 to 411 (IITL…FFWI), 471 to 491 (VTEL…LAFG), and 495 to 515 (FFIY…GYVG).

This sequence belongs to the glycosyltransferase 2 family. Plant cellulose synthase-like A subfamily.

It is found in the golgi apparatus membrane. The enzyme catalyses GDP-mannose + (glucomannan)n = GDP + (glucomannan)n+1.. In terms of biological role, possesses glucomannan synthase and mannan synthase activities in vitro. Mannan synthase consists of a 4-beta-mannosyltransferase activity on mannan using GDP-mannose. The beta-1,4-mannan product is the backbone for galactomannan synthesis by galactomannan galactosyltransferase. Galactomannan is a noncellulosic polysaccharides of plant cell wall. This chain is Glucomannan 4-beta-mannosyltransferase 1, found in Oryza sativa subsp. japonica (Rice).